Here is a 217-residue protein sequence, read N- to C-terminus: MRLRHKPYAMDRINEYSHIVIGNPEESAGNWKEIFGNEQPIHIEVGTGRGRFMYDMAKANPHINYIGIEKFTSVVVDALDKLIEEEVPNLKLINKDAEDLTVFFAKGEIDRVYLNFSDPWPKNRHTKRRLTYKTFLRNYEEVLVDGGEIHFKTDNQGLFEYSIMSMAEYGMLLTYLSLDLHNSDYEGNIMTEYEEKFSSKGHRIYRVEAKYRTEPMQ.

Positions 44, 69, 96, and 118 each coordinate S-adenosyl-L-methionine. Residue Asp-118 is part of the active site. Substrate contacts are provided by residues Lys-122, Asp-154, and 191 to 194 (TEYE).

This sequence belongs to the class I-like SAM-binding methyltransferase superfamily. TrmB family.

The enzyme catalyses guanosine(46) in tRNA + S-adenosyl-L-methionine = N(7)-methylguanosine(46) in tRNA + S-adenosyl-L-homocysteine. The protein operates within tRNA modification; N(7)-methylguanine-tRNA biosynthesis. Its function is as follows. Catalyzes the formation of N(7)-methylguanine at position 46 (m7G46) in tRNA. This chain is tRNA (guanine-N(7)-)-methyltransferase, found in Bacillus mycoides (strain KBAB4) (Bacillus weihenstephanensis).